The sequence spans 381 residues: 8-amino-7-oxononanoate synthase (381 aa).

Position 27 (Arg-27) interacts with substrate. 105–106 (GY) is a pyridoxal 5'-phosphate binding site. His-130 is a substrate binding site. Pyridoxal 5'-phosphate contacts are provided by residues Ser-176, 201 to 204 (DEAH), and 232 to 235 (TLSK). Lys-235 bears the N6-(pyridoxal phosphate)lysine mark. Thr-345 contributes to the substrate binding site.

It belongs to the class-II pyridoxal-phosphate-dependent aminotransferase family. BioF subfamily. Homodimer. The cofactor is pyridoxal 5'-phosphate.

It catalyses the reaction 6-carboxyhexanoyl-[ACP] + L-alanine + H(+) = (8S)-8-amino-7-oxononanoate + holo-[ACP] + CO2. It functions in the pathway cofactor biosynthesis; biotin biosynthesis. Its function is as follows. Catalyzes the decarboxylative condensation of pimeloyl-[acyl-carrier protein] and L-alanine to produce 8-amino-7-oxononanoate (AON), [acyl-carrier protein], and carbon dioxide. The chain is 8-amino-7-oxononanoate synthase from Mycobacterium avium (strain 104).